Consider the following 126-residue polypeptide: Large ribosomal subunit protein bL12 (126 aa).

The segment covering 107 to 116 (EDAEKAKSQL) has biased composition (basic and acidic residues). Residues 107–126 (EDAEKAKSQLEEAGATVELK) form a disordered region.

The protein belongs to the bacterial ribosomal protein bL12 family. In terms of assembly, homodimer. Part of the ribosomal stalk of the 50S ribosomal subunit. Forms a multimeric L10(L12)X complex, where L10 forms an elongated spine to which 2 to 4 L12 dimers bind in a sequential fashion. Binds GTP-bound translation factors.

Functionally, forms part of the ribosomal stalk which helps the ribosome interact with GTP-bound translation factors. Is thus essential for accurate translation. The protein is Large ribosomal subunit protein bL12 of Bifidobacterium adolescentis (strain ATCC 15703 / DSM 20083 / NCTC 11814 / E194a).